Reading from the N-terminus, the 170-residue chain is Adenine phosphoribosyltransferase (170 aa).

The protein belongs to the purine/pyrimidine phosphoribosyltransferase family. As to quaternary structure, homodimer.

The protein resides in the cytoplasm. It carries out the reaction AMP + diphosphate = 5-phospho-alpha-D-ribose 1-diphosphate + adenine. Its pathway is purine metabolism; AMP biosynthesis via salvage pathway; AMP from adenine: step 1/1. Its function is as follows. Catalyzes a salvage reaction resulting in the formation of AMP, that is energically less costly than de novo synthesis. The chain is Adenine phosphoribosyltransferase from Mycoplasmopsis agalactiae (strain NCTC 10123 / CIP 59.7 / PG2) (Mycoplasma agalactiae).